Reading from the N-terminus, the 494-residue chain is Aspartyl/glutamyl-tRNA(Asn/Gln) amidotransferase subunit B (494 aa).

This sequence belongs to the GatB/GatE family. GatB subfamily. Heterotrimer of A, B and C subunits.

It carries out the reaction L-glutamyl-tRNA(Gln) + L-glutamine + ATP + H2O = L-glutaminyl-tRNA(Gln) + L-glutamate + ADP + phosphate + H(+). The enzyme catalyses L-aspartyl-tRNA(Asn) + L-glutamine + ATP + H2O = L-asparaginyl-tRNA(Asn) + L-glutamate + ADP + phosphate + 2 H(+). In terms of biological role, allows the formation of correctly charged Asn-tRNA(Asn) or Gln-tRNA(Gln) through the transamidation of misacylated Asp-tRNA(Asn) or Glu-tRNA(Gln) in organisms which lack either or both of asparaginyl-tRNA or glutaminyl-tRNA synthetases. The reaction takes place in the presence of glutamine and ATP through an activated phospho-Asp-tRNA(Asn) or phospho-Glu-tRNA(Gln). This is Aspartyl/glutamyl-tRNA(Asn/Gln) amidotransferase subunit B from Rhodopseudomonas palustris (strain HaA2).